The following is a 220-amino-acid chain: Metalloproteinase inhibitor 2 (220 aa).

The signal sequence occupies residues 1–26 (MGAAARSLRLALGLLLLATLPRPADA). Zn(2+) is bound at residue cysteine 27. Involved in metalloproteinase-binding stretches follow at residues 27-30 (CSCS) and 95-96 (SA). 6 disulfides stabilise this stretch: cysteine 27–cysteine 98, cysteine 29–cysteine 127, cysteine 39–cysteine 152, cysteine 154–cysteine 201, cysteine 159–cysteine 164, and cysteine 172–cysteine 193. The NTR domain maps to 27 to 152 (CSCSPVHPQQ…SLNHRYQMGC (126 aa)).

It belongs to the protease inhibitor I35 (TIMP) family. Interacts (via the C-terminal) with MMP2 (via the C-terminal PEX domain); the interaction inhibits the MMP2 activity. The activity of TIMP2 is dependent on the presence of disulfide bonds.

Its subcellular location is the secreted. Its function is as follows. Complexes with metalloproteinases (such as collagenases) and irreversibly inactivates them by binding to their catalytic zinc cofactor. This is Metalloproteinase inhibitor 2 (TIMP2) from Canis lupus familiaris (Dog).